A 195-amino-acid chain; its full sequence is ATP-dependent Clp protease proteolytic subunit 2 (195 aa).

The Nucleophile role is filled by serine 92. Histidine 117 is an active-site residue.

It belongs to the peptidase S14 family. As to quaternary structure, fourteen ClpP subunits assemble into 2 heptameric rings which stack back to back to give a disk-like structure with a central cavity, resembling the structure of eukaryotic proteasomes.

The protein localises to the cytoplasm. It catalyses the reaction Hydrolysis of proteins to small peptides in the presence of ATP and magnesium. alpha-casein is the usual test substrate. In the absence of ATP, only oligopeptides shorter than five residues are hydrolyzed (such as succinyl-Leu-Tyr-|-NHMec, and Leu-Tyr-Leu-|-Tyr-Trp, in which cleavage of the -Tyr-|-Leu- and -Tyr-|-Trp bonds also occurs).. Its function is as follows. Cleaves peptides in various proteins in a process that requires ATP hydrolysis. Has a chymotrypsin-like activity. Plays a major role in the degradation of misfolded proteins. The protein is ATP-dependent Clp protease proteolytic subunit 2 of Rhodococcus jostii (strain RHA1).